The primary structure comprises 59 residues: Thrombostatin (59 aa).

4 disulfide bridges follow: Cys3-Cys22, Cys17-Cys37, Cys39-Cys51, and Cys52-Cys57. The short motif at 43–45 (RGD) is the Cell attachment site element.

Belongs to the three-finger toxin family. Short-chain subfamily. Antiplatelet toxin sub-subfamily. As to expression, expressed by the venom gland.

The protein resides in the secreted. In terms of biological role, inhibits ADP-induced platelet aggregation and inhibits the binding of purified platelet fibrinogen receptor alpha-IIb/beta-3 (ITGA2B/ITGB3) to immobilized fibrinogen. The sequence is that of Thrombostatin from Dendroaspis angusticeps (Eastern green mamba).